A 262-amino-acid polypeptide reads, in one-letter code: Methionine-rich nacre protein (262 aa).

The N-terminal stretch at 1–22 is a signal peptide; it reads MSIMRRILCLAVVIFIINDVSS. Positions 26–35 are enriched in low complexity; the sequence is GNNKNWKKNG. Residues 26 to 84 are disordered; the sequence is GNNKNWKKNGMSLSSPGNKKPTGNNAVPQKSKMNNMNQNSLSQPKRSSPPGNSMYNMAN. Over residues 36-84 the composition is skewed to polar residues; the sequence is MSLSSPGNKKPTGNNAVPQKSKMNNMNQNSLSQPKRSSPPGNSMYNMAN.

As to expression, expressed in mantle and, after secretion, incorporated into acid-insoluble nacre matrix of the shell (at protein level). Expressed primarily in the mantle with highest level in the mantle pallium and lower level in the mantle edge.

It is found in the secreted. The chain is Methionine-rich nacre protein from Pinctada maxima (Silver-lipped pearl oyster).